The sequence spans 457 residues: tRNA-2-methylthio-N(6)-dimethylallyladenosine synthase (457 aa).

The MTTase N-terminal domain maps to 3 to 120 (KKVYVKTFGC…LPQMIDARRA (118 aa)). 6 residues coordinate [4Fe-4S] cluster: Cys-12, Cys-49, Cys-83, Cys-157, Cys-161, and Cys-164. One can recognise a Radical SAM core domain in the interval 143–377 (RVEGPSAFVS…QATIEENVAR (235 aa)). In terms of domain architecture, TRAM spans 380-447 (QSMVGKVERI…PHSLRGELVL (68 aa)).

It belongs to the methylthiotransferase family. MiaB subfamily. In terms of assembly, monomer. Requires [4Fe-4S] cluster as cofactor.

It localises to the cytoplasm. It catalyses the reaction N(6)-dimethylallyladenosine(37) in tRNA + (sulfur carrier)-SH + AH2 + 2 S-adenosyl-L-methionine = 2-methylsulfanyl-N(6)-dimethylallyladenosine(37) in tRNA + (sulfur carrier)-H + 5'-deoxyadenosine + L-methionine + A + S-adenosyl-L-homocysteine + 2 H(+). Functionally, catalyzes the methylthiolation of N6-(dimethylallyl)adenosine (i(6)A), leading to the formation of 2-methylthio-N6-(dimethylallyl)adenosine (ms(2)i(6)A) at position 37 in tRNAs that read codons beginning with uridine. The polypeptide is tRNA-2-methylthio-N(6)-dimethylallyladenosine synthase (Burkholderia cenocepacia (strain HI2424)).